Consider the following 729-residue polypeptide: 1,4-alpha-glucan branching enzyme GlgB (729 aa).

D405 functions as the Nucleophile in the catalytic mechanism. Catalysis depends on E458, which acts as the Proton donor.

Belongs to the glycosyl hydrolase 13 family. GlgB subfamily. Monomer.

It carries out the reaction Transfers a segment of a (1-&gt;4)-alpha-D-glucan chain to a primary hydroxy group in a similar glucan chain.. The protein operates within glycan biosynthesis; glycogen biosynthesis. Catalyzes the formation of the alpha-1,6-glucosidic linkages in glycogen by scission of a 1,4-alpha-linked oligosaccharide from growing alpha-1,4-glucan chains and the subsequent attachment of the oligosaccharide to the alpha-1,6 position. This is 1,4-alpha-glucan branching enzyme GlgB from Mannheimia succiniciproducens (strain KCTC 0769BP / MBEL55E).